The sequence spans 965 residues: FKBP12-associated protein 1 (965 aa).

The RING-type; degenerate zinc finger occupies 68-118; it reads CMICTVEMDYTCQMFACKRCYRVFDYGCIREWALKSTEKTVDRIWKCPNCY. NF-X1-type zinc fingers lie at residues 159-177, 216-235, 362-382, 468-487, and 586-606; these read CMHGCSKICHLGPHPECTR, CSIHTCKKKCHPGLCGPCPE, CGKHSCPFTCHDKACMEPCLQ, CGIHKCQRKCHPGKCPPCLE, and CYHTCQKTCHLPGNCQKVCKQ. One can recognise an R3H domain in the interval 733-796; the sequence is ERWCSQIEAI…MRSVFIKKED (64 aa). Residue Thr-951 is modified to Phosphothreonine. Ser-958 bears the Phosphoserine mark.

It belongs to the NFX1 family. In terms of assembly, interacts with FPR1.

It is found in the cytoplasm. The protein localises to the nucleus. May play a role in transcription regulation. In Saccharomyces cerevisiae (strain ATCC 204508 / S288c) (Baker's yeast), this protein is FKBP12-associated protein 1 (FAP1).